Reading from the N-terminus, the 360-residue chain is Phospho-N-acetylmuramoyl-pentapeptide-transferase (360 aa).

The Periplasmic portion of the chain corresponds to 1-25 (MLVWLAEHLVKYYSGFNVFSYLTFR). Residues 26–46 (AIVSLLTALFISLWMGPRMIA) form a helical membrane-spanning segment. Over 47-71 (HLQKLSFGQVVRNDGPESHFSKRGT) the chain is Cytoplasmic. A helical membrane pass occupies residues 72–92 (PTMGGIMILTAIVISVLLWAY). Pro93 is a topological domain (periplasmic). A helical membrane pass occupies residues 94 to 114 (SNPYVWCVLVVLVGYGIIGFV). At 115–131 (DDYRKVVRKDTKGLIAR) the chain is on the cytoplasmic side. A helical transmembrane segment spans residues 132-152 (WKYFWMSVIALGVAFALYLAG). Residues 153 to 167 (KDTPATQLVVPFFKD) are Periplasmic-facing. The helical transmembrane segment at 168 to 188 (VMPQLGLFYILLAYFVIVGTG) threads the bilayer. Topologically, residues 189–198 (NAVNLTDGLD) are cytoplasmic. Residues 199 to 219 (GLAIMPTVFVAGGFALVAWAT) form a helical membrane-spanning segment. Residues 220-235 (GNMNFASYLHIPYLRH) lie on the Periplasmic side of the membrane. A helical transmembrane segment spans residues 236 to 256 (AGELVIVCTAIVGAGLGFLWF). The Cytoplasmic segment spans residues 257 to 262 (NTYPAQ). Residues 263 to 283 (VFMGDVGSLALGGALGIIAVL) traverse the membrane as a helical segment. Residues 284–287 (LRQE) lie on the Periplasmic side of the membrane. A helical membrane pass occupies residues 288–308 (FLLVIMGGVFVVETLSVILQV). Residues 309 to 337 (GSFKLRGQRIFRMAPIHHHYELKGWPEPR) lie on the Cytoplasmic side of the membrane. Residues 338-358 (VIVRFWIISLMLVLIGLATLK) traverse the membrane as a helical segment. Residues 359 to 360 (VR) are Periplasmic-facing.

Belongs to the glycosyltransferase 4 family. MraY subfamily. It depends on Mg(2+) as a cofactor.

It localises to the cell inner membrane. The catalysed reaction is UDP-N-acetyl-alpha-D-muramoyl-L-alanyl-gamma-D-glutamyl-meso-2,6-diaminopimeloyl-D-alanyl-D-alanine + di-trans,octa-cis-undecaprenyl phosphate = di-trans,octa-cis-undecaprenyl diphospho-N-acetyl-alpha-D-muramoyl-L-alanyl-D-glutamyl-meso-2,6-diaminopimeloyl-D-alanyl-D-alanine + UMP. It participates in cell wall biogenesis; peptidoglycan biosynthesis. Its function is as follows. Catalyzes the initial step of the lipid cycle reactions in the biosynthesis of the cell wall peptidoglycan: transfers peptidoglycan precursor phospho-MurNAc-pentapeptide from UDP-MurNAc-pentapeptide onto the lipid carrier undecaprenyl phosphate, yielding undecaprenyl-pyrophosphoryl-MurNAc-pentapeptide, known as lipid I. This chain is Phospho-N-acetylmuramoyl-pentapeptide-transferase, found in Escherichia coli O7:K1 (strain IAI39 / ExPEC).